We begin with the raw amino-acid sequence, 31 residues long: Cyclotide vibi-G (31 aa).

The cyclopeptide (Gly-Asn) cross-link spans 1–31; sequence GTFPCGESCVFIPCLTSAIGCSCKSKVCYKN. 3 disulfide bridges follow: C5–C21, C9–C23, and C14–C28.

This is a cyclic peptide.

In terms of biological role, probably participates in a plant defense mechanism. Has cytotoxic activity, active against a human lymphoma cell line with an IC(50) of 0.96 uM. The chain is Cyclotide vibi-G from Viola biflora (Yellow wood violet).